Consider the following 260-residue polypeptide: Dolichol-phosphate mannosyltransferase subunit 1 (260 aa).

The residue at position 2 (A2) is an N-acetylalanine. Residues S3 and S9 each carry the phosphoserine modification. Residues P32, Y34, E36, I63, D65, D118, A119, D120, R147, R234, and K240 each coordinate GDP-alpha-D-mannose. D120 is a binding site for Mg(2+). D120 is a Mn(2+) binding site.

It belongs to the glycosyltransferase 2 family. As to quaternary structure, component of the dolichol-phosphate mannose (DPM) synthase complex composed of DPM1, DPM2 and DPM3; within the complex, directly interacts with DPM3. This interaction stabilizes DPM1. Mg(2+) serves as cofactor. The cofactor is Mn(2+). Requires Ca(2+) as cofactor.

It localises to the endoplasmic reticulum. The catalysed reaction is a di-trans,poly-cis-dolichyl phosphate + GDP-alpha-D-mannose = a di-trans,poly-cis-dolichyl beta-D-mannosyl phosphate + GDP. Its pathway is protein modification; protein glycosylation. Its function is as follows. Transfers mannose from GDP-mannose to dolichol monophosphate to form dolichol phosphate mannose (Dol-P-Man) which is the mannosyl donor in pathways leading to N-glycosylation, glycosyl phosphatidylinositol membrane anchoring, and O-mannosylation of proteins; catalytic subunit of the dolichol-phosphate mannose (DPM) synthase complex. This is Dolichol-phosphate mannosyltransferase subunit 1 (DPM1) from Homo sapiens (Human).